The following is a 532-amino-acid chain: Phosphoenolpyruvate carboxykinase (ATP) (532 aa).

Substrate is bound by residues R60, Y194, and K200. ATP-binding positions include K200, H219, and 237–245 (GLSGTGKTT). Mn(2+) contacts are provided by K200 and H219. D258 is a binding site for Mn(2+). E286, R324, and T449 together coordinate ATP. R324 contacts substrate.

This sequence belongs to the phosphoenolpyruvate carboxykinase (ATP) family. Requires Mn(2+) as cofactor.

The protein localises to the cytoplasm. It carries out the reaction oxaloacetate + ATP = phosphoenolpyruvate + ADP + CO2. It functions in the pathway carbohydrate biosynthesis; gluconeogenesis. In terms of biological role, involved in the gluconeogenesis. Catalyzes the conversion of oxaloacetate (OAA) to phosphoenolpyruvate (PEP) through direct phosphoryl transfer between the nucleoside triphosphate and OAA. The sequence is that of Phosphoenolpyruvate carboxykinase (ATP) from Paracoccus denitrificans (strain Pd 1222).